The primary structure comprises 251 residues: Ubiquinone/menaquinone biosynthesis C-methyltransferase UbiE (251 aa).

Residues Thr74, Asp95, and 123 to 124 each bind S-adenosyl-L-methionine; that span reads NA.

Belongs to the class I-like SAM-binding methyltransferase superfamily. MenG/UbiE family.

It catalyses the reaction a 2-demethylmenaquinol + S-adenosyl-L-methionine = a menaquinol + S-adenosyl-L-homocysteine + H(+). It carries out the reaction a 2-methoxy-6-(all-trans-polyprenyl)benzene-1,4-diol + S-adenosyl-L-methionine = a 5-methoxy-2-methyl-3-(all-trans-polyprenyl)benzene-1,4-diol + S-adenosyl-L-homocysteine + H(+). The protein operates within quinol/quinone metabolism; menaquinone biosynthesis; menaquinol from 1,4-dihydroxy-2-naphthoate: step 2/2. It participates in cofactor biosynthesis; ubiquinone biosynthesis. Its function is as follows. Methyltransferase required for the conversion of demethylmenaquinol (DMKH2) to menaquinol (MKH2) and the conversion of 2-polyprenyl-6-methoxy-1,4-benzoquinol (DDMQH2) to 2-polyprenyl-3-methyl-6-methoxy-1,4-benzoquinol (DMQH2). This is Ubiquinone/menaquinone biosynthesis C-methyltransferase UbiE from Pseudoalteromonas translucida (strain TAC 125).